Here is a 473-residue protein sequence, read N- to C-terminus: Ribulose bisphosphate carboxylase large chain (473 aa).

Residues 1-2 (MS) constitute a propeptide that is removed on maturation. N-acetylproline is present on proline 3. Residue lysine 14 is modified to N6,N6,N6-trimethyllysine. Substrate-binding residues include asparagine 123 and threonine 173. Lysine 175 acts as the Proton acceptor in catalysis. Lysine 177 is a substrate binding site. Lysine 201, aspartate 203, and glutamate 204 together coordinate Mg(2+). Lysine 201 is subject to N6-carboxylysine. Histidine 294 functions as the Proton acceptor in the catalytic mechanism. Positions 295, 327, and 379 each coordinate substrate.

It belongs to the RuBisCO large chain family. Type I subfamily. Heterohexadecamer of 8 large chains and 8 small chains; disulfide-linked. The disulfide link is formed within the large subunit homodimers. It depends on Mg(2+) as a cofactor. The disulfide bond which can form in the large chain dimeric partners within the hexadecamer appears to be associated with oxidative stress and protein turnover.

The protein resides in the plastid. It localises to the chloroplast. It carries out the reaction 2 (2R)-3-phosphoglycerate + 2 H(+) = D-ribulose 1,5-bisphosphate + CO2 + H2O. The enzyme catalyses D-ribulose 1,5-bisphosphate + O2 = 2-phosphoglycolate + (2R)-3-phosphoglycerate + 2 H(+). Its function is as follows. RuBisCO catalyzes two reactions: the carboxylation of D-ribulose 1,5-bisphosphate, the primary event in carbon dioxide fixation, as well as the oxidative fragmentation of the pentose substrate in the photorespiration process. Both reactions occur simultaneously and in competition at the same active site. The polypeptide is Ribulose bisphosphate carboxylase large chain (Monarda didyma (Scarlet bee-balm)).